Here is a 156-residue protein sequence, read N- to C-terminus: ATP synthase subunit b (156 aa).

A helical membrane pass occupies residues 11–31 (AIAFVLFVLFCMKYIWPPIMA).

It belongs to the ATPase B chain family. F-type ATPases have 2 components, F(1) - the catalytic core - and F(0) - the membrane proton channel. F(1) has five subunits: alpha(3), beta(3), gamma(1), delta(1), epsilon(1). F(0) has three main subunits: a(1), b(2) and c(10-14). The alpha and beta chains form an alternating ring which encloses part of the gamma chain. F(1) is attached to F(0) by a central stalk formed by the gamma and epsilon chains, while a peripheral stalk is formed by the delta and b chains.

Its subcellular location is the cell inner membrane. In terms of biological role, f(1)F(0) ATP synthase produces ATP from ADP in the presence of a proton or sodium gradient. F-type ATPases consist of two structural domains, F(1) containing the extramembraneous catalytic core and F(0) containing the membrane proton channel, linked together by a central stalk and a peripheral stalk. During catalysis, ATP synthesis in the catalytic domain of F(1) is coupled via a rotary mechanism of the central stalk subunits to proton translocation. Functionally, component of the F(0) channel, it forms part of the peripheral stalk, linking F(1) to F(0). This chain is ATP synthase subunit b, found in Yersinia enterocolitica serotype O:8 / biotype 1B (strain NCTC 13174 / 8081).